We begin with the raw amino-acid sequence, 164 residues long: MRYNEKELQALSRQPAEMAAELGMRGPKKGSVAKRRLVKLVVNFLFYFRPDEAEPLGALLLERCRVAQEEPGGFSISFVEDLSRKYHFECCSQEQCQDWMEALQRASYEYMRQSLIFYRNEIRKMTGKDPLEQFGISEEARFQLNSLPKDGRTTCIGSQLNVLD.

Residues 15–108 (PAEMAAELGM…WMEALQRASY (94 aa)) enclose the PH domain.

The sequence is that of Pleckstrin homology domain-containing family J member 1 (Plekhj1) from Mus musculus (Mouse).